We begin with the raw amino-acid sequence, 314 residues long: GTPase Era (314 aa).

One can recognise an Era-type G domain in the interval 7–188; the sequence is RCGFAAVIGS…REFIAGLMPE (182 aa). The segment at 15–22 is G1; it reads GSPNAGKS. 15-22 serves as a coordination point for GTP; it reads GSPNAGKS. Positions 41-45 are G2; it reads QTTRF. The segment at 62–65 is G3; the sequence is DTPG. GTP contacts are provided by residues 62–66 and 138–141; these read DTPGV and NKVD. Residues 138 to 141 form a G4 region; the sequence is NKVD. The tract at residues 167–169 is G5; that stretch reads ISA. In terms of domain architecture, KH type-2 spans 219-296; sequence LHEELPYASM…HLFLNVKVDA (78 aa).

The protein belongs to the TRAFAC class TrmE-Era-EngA-EngB-Septin-like GTPase superfamily. Era GTPase family. As to quaternary structure, monomer.

It localises to the cytoplasm. It is found in the cell inner membrane. An essential GTPase that binds both GDP and GTP, with rapid nucleotide exchange. Plays a role in 16S rRNA processing and 30S ribosomal subunit biogenesis and possibly also in cell cycle regulation and energy metabolism. This Maricaulis maris (strain MCS10) (Caulobacter maris) protein is GTPase Era.